Consider the following 214-residue polypeptide: NADH-quinone oxidoreductase subunit C (214 aa).

It belongs to the complex I 30 kDa subunit family. NDH-1 is composed of 14 different subunits. Subunits NuoB, C, D, E, F, and G constitute the peripheral sector of the complex.

It is found in the cell inner membrane. It catalyses the reaction a quinone + NADH + 5 H(+)(in) = a quinol + NAD(+) + 4 H(+)(out). Its function is as follows. NDH-1 shuttles electrons from NADH, via FMN and iron-sulfur (Fe-S) centers, to quinones in the respiratory chain. The immediate electron acceptor for the enzyme in this species is believed to be ubiquinone. Couples the redox reaction to proton translocation (for every two electrons transferred, four hydrogen ions are translocated across the cytoplasmic membrane), and thus conserves the redox energy in a proton gradient. The polypeptide is NADH-quinone oxidoreductase subunit C (Francisella tularensis subsp. novicida (strain U112)).